Here is a 196-residue protein sequence, read N- to C-terminus: DnaA initiator-associating protein DiaA (196 aa).

Positions L34–D196 constitute an SIS domain.

It belongs to the SIS family. DiaA subfamily. In terms of assembly, homotetramer; dimer of dimers.

Required for the timely initiation of chromosomal replication via direct interactions with the DnaA initiator protein. This is DnaA initiator-associating protein DiaA from Shigella boydii serotype 18 (strain CDC 3083-94 / BS512).